A 327-amino-acid chain; its full sequence is GMP reductase (327 aa).

Cysteine 176 (thioimidate intermediate) is an active-site residue. 205–228 contacts NADP(+); sequence IIADGGIRTHGDIAKSIRFGASMV.

The protein belongs to the IMPDH/GMPR family. GuaC type 2 subfamily.

The catalysed reaction is IMP + NH4(+) + NADP(+) = GMP + NADPH + 2 H(+). Functionally, catalyzes the irreversible NADPH-dependent deamination of GMP to IMP. It functions in the conversion of nucleobase, nucleoside and nucleotide derivatives of G to A nucleotides, and in maintaining the intracellular balance of A and G nucleotides. The polypeptide is GMP reductase (Streptococcus pyogenes serotype M1).